The chain runs to 137 residues: Small ribosomal subunit protein uS9 (137 aa).

It belongs to the universal ribosomal protein uS9 family.

This is Small ribosomal subunit protein uS9 (rps9) from Saccharolobus solfataricus (strain ATCC 35092 / DSM 1617 / JCM 11322 / P2) (Sulfolobus solfataricus).